We begin with the raw amino-acid sequence, 375 residues long: Trichodiene synthase (375 aa).

The protein belongs to the trichodiene synthase family.

It catalyses the reaction (2E,6E)-farnesyl diphosphate = trichodiene + diphosphate. It participates in sesquiterpene biosynthesis; trichothecene biosynthesis. In terms of biological role, TS is a member of the terpene cyclase group of enzymes. It catalyzes the isomerization and cyclization of farnesyl pyro-phosphate to form trichodiene, the first cyclic intermediate in the biosynthetic pathway for trichothecenes. It serves to branch trichothecene biosynthesis from the isoprenoid pathway. The polypeptide is Trichodiene synthase (TRI5) (Fusarium mesoamericanum).